We begin with the raw amino-acid sequence, 404 residues long: Serpin-Z2B (404 aa).

Residues 349–373 are RCL; sequence GTEAAAATACTMKFLCLTLTSPVDF.

The protein belongs to the serpin family.

Probable serine protease inhibitor. This chain is Serpin-Z2B, found in Oryza sativa subsp. japonica (Rice).